Consider the following 367-residue polypeptide: Multifunctional tryptophan biosynthesis protein (367 aa).

The Glutamine amidotransferase type-1 domain maps to 7–201; it reads NVVMIDNYDS…LNVSGGYWEE (195 aa). 58-60 is a binding site for L-glutamine; that stretch reads GPG. Catalysis depends on cysteine 86, which acts as the Nucleophile; for GATase activity. Residues glutamine 90 and 136–137 each bind L-glutamine; that span reads SL. Residues histidine 175 and glutamate 177 each act as for GATase activity in the active site. The segment at 209–367 is indole-3-glycerol phosphate synthase; the sequence is RKESILEKIY…TVLLIVKMLS (159 aa).

In terms of assembly, tetramer of two components I and two components II.

The catalysed reaction is chorismate + L-glutamine = anthranilate + pyruvate + L-glutamate + H(+). The enzyme catalyses 1-(2-carboxyphenylamino)-1-deoxy-D-ribulose 5-phosphate + H(+) = (1S,2R)-1-C-(indol-3-yl)glycerol 3-phosphate + CO2 + H2O. It functions in the pathway amino-acid biosynthesis; L-tryptophan biosynthesis; L-tryptophan from chorismate: step 1/5. It participates in amino-acid biosynthesis; L-tryptophan biosynthesis; L-tryptophan from chorismate: step 4/5. The polypeptide is Multifunctional tryptophan biosynthesis protein (Pichia angusta (Yeast)).